We begin with the raw amino-acid sequence, 754 residues long: Nitrate reductase (754 aa).

The segment at residues 1 to 31 (MKFTRRSFVKASALATAMVAAGCSPQPVAPK) is a signal peptide (tat-type signal). Residues 39–95 (ATWYKTVCRYCGVGCGVMVAAKDNRVVAVKGDTENPVNKGLLCVKGYYLDRIMNTEE) enclose the 4Fe-4S Mo/W bis-MGD-type domain. [4Fe-4S] cluster contacts are provided by C46, C49, C53, and C81. Mo-bis(molybdopterin guanine dinucleotide) contacts are provided by residues K83, Q144, N169, C173, 256–258 (GTD), M341, Q345, N451, K497, D524, 642–651 (TGRILEHWHT), N728, and K745.

Belongs to the prokaryotic molybdopterin-containing oxidoreductase family. NasA/NapA/NarB subfamily. Component of the nitrate reductase NapAB complex composed of NapA and NapB. Requires [4Fe-4S] cluster as cofactor. It depends on Mo-bis(molybdopterin guanine dinucleotide) as a cofactor. Post-translationally, predicted to be exported by the Tat system. The position of the signal peptide cleavage has not been experimentally proven.

Its subcellular location is the secreted. The catalysed reaction is 2 Fe(II)-[cytochrome] + nitrate + 2 H(+) = 2 Fe(III)-[cytochrome] + nitrite + H2O. In terms of biological role, catalytic subunit of the nitrate reductase complex NapAB. Receives electrons from NapB and catalyzes the reduction of nitrate to nitrite. The protein is Nitrate reductase of Symbiobacterium thermophilum (strain DSM 24528 / JCM 14929 / IAM 14863 / T).